Reading from the N-terminus, the 260-residue chain is Proteasome subunit alpha (260 aa).

Belongs to the peptidase T1A family. The 20S proteasome core is composed of 14 alpha and 14 beta subunits that assemble into four stacked heptameric rings, resulting in a barrel-shaped structure. The two inner rings, each composed of seven catalytic beta subunits, are sandwiched by two outer rings, each composed of seven alpha subunits. The catalytic chamber with the active sites is on the inside of the barrel. Has a gated structure, the ends of the cylinder being occluded by the N-termini of the alpha-subunits. Is capped at one or both ends by the proteasome regulatory ATPase, PAN.

Its subcellular location is the cytoplasm. The formation of the proteasomal ATPase PAN-20S proteasome complex, via the docking of the C-termini of PAN into the intersubunit pockets in the alpha-rings, triggers opening of the gate for substrate entry. Interconversion between the open-gate and close-gate conformations leads to a dynamic regulation of the 20S proteasome proteolysis activity. Functionally, component of the proteasome core, a large protease complex with broad specificity involved in protein degradation. This chain is Proteasome subunit alpha, found in Pyrococcus abyssi (strain GE5 / Orsay).